A 213-amino-acid polypeptide reads, in one-letter code: Cytochrome b6 (213 aa).

The helical transmembrane segment at 30-50 threads the bilayer; sequence IFYCLGGLTLLCFIIQCLTGV. Cys33 lines the heme c pocket. Positions 84 and 98 each coordinate heme b. 3 consecutive transmembrane segments (helical) span residues 88–108, 114–134, and 184–204; these read CQLM…TGAF, LNWV…FTGY, and LHVM…FIMI. Heme b-binding residues include His185 and His200.

This sequence belongs to the cytochrome b family. PetB subfamily. As to quaternary structure, the subunits of the cytochrome bc complex are a Rieske Fe-S protein (PetC), cytochrome b6 (PetB), subunit IV (PetD), and a diheme cytochrome c (PetX). Heme b serves as cofactor. The cofactor is heme c.

The protein localises to the cell membrane. In terms of biological role, component of the cytochrome bc complex which donates electrons to the photosynthetic reaction center. This is Cytochrome b6 from Heliobacterium modesticaldum (strain ATCC 51547 / Ice1).